Here is a 427-residue protein sequence, read N- to C-terminus: MKLKTNIRHLHGSIRVPGDKSISHRSIIFGSLAEGETKVYDILRGEDVLSTMQVFRDLGVEIEDKDGVITIQGVGMAGLKAPQNALNMGNSGTSIRLISGVLAGADFEVEMFGDDSLSKRPMDRVTLPLKKMGVSISGQTERDLPPLRLKGTKNLRPIHYELPIASAQVKSALMFAALQAKGESVIIEKECTRNHTEDMLKQFGGHLSVDGKKITVQGPQKLTGQKVVVPGDISSAAFWLVAGLINPNSHLVLQNVGINETRTGIIDVIRAMGGKLEVTEIDPVAKSSTLTVESSDLKGTEIGGALIPRLIDELPIIALLATQAQGVTVIKDAEELKVKETDRIQVVADALNSMGADITPTADGMIIKGKSALHGARVNTFGDHRIGMMTAIAALLVADGEVELDRAEAINTSYPSFFDDLESLIHG.

Positions 20, 21, and 25 each coordinate 3-phosphoshikimate. K20 provides a ligand contact to phosphoenolpyruvate. Residues G92 and R120 each coordinate phosphoenolpyruvate. 3-phosphoshikimate-binding residues include S166, Q168, D312, and K339. Q168 is a binding site for phosphoenolpyruvate. The active-site Proton acceptor is D312. Residues R343 and R385 each coordinate phosphoenolpyruvate.

It belongs to the EPSP synthase family. As to quaternary structure, monomer.

The protein localises to the cytoplasm. It carries out the reaction 3-phosphoshikimate + phosphoenolpyruvate = 5-O-(1-carboxyvinyl)-3-phosphoshikimate + phosphate. Its pathway is metabolic intermediate biosynthesis; chorismate biosynthesis; chorismate from D-erythrose 4-phosphate and phosphoenolpyruvate: step 6/7. Functionally, catalyzes the transfer of the enolpyruvyl moiety of phosphoenolpyruvate (PEP) to the 5-hydroxyl of shikimate-3-phosphate (S3P) to produce enolpyruvyl shikimate-3-phosphate and inorganic phosphate. In Streptococcus pneumoniae serotype 2 (strain D39 / NCTC 7466), this protein is 3-phosphoshikimate 1-carboxyvinyltransferase.